The following is a 288-amino-acid chain: 4-hydroxybenzoate octaprenyltransferase (288 aa).

8 helical membrane passes run 23 to 43 (IGSL…GRGI), 46 to 66 (AKIL…GCVV), 98 to 118 (ILFV…NSMT), 141 to 161 (LPQV…FAAV), 163 to 183 (ESLP…TVAY), 213 to 233 (LIIG…GWLM), 234 to 254 (NLGG…THQQ), and 268 to 288 (AFLN…ISYW).

This sequence belongs to the UbiA prenyltransferase family. Mg(2+) serves as cofactor.

The protein localises to the cell inner membrane. It carries out the reaction all-trans-octaprenyl diphosphate + 4-hydroxybenzoate = 4-hydroxy-3-(all-trans-octaprenyl)benzoate + diphosphate. It participates in cofactor biosynthesis; ubiquinone biosynthesis. Catalyzes the prenylation of para-hydroxybenzoate (PHB) with an all-trans polyprenyl group. Mediates the second step in the final reaction sequence of ubiquinone-8 (UQ-8) biosynthesis, which is the condensation of the polyisoprenoid side chain with PHB, generating the first membrane-bound Q intermediate 3-octaprenyl-4-hydroxybenzoate. The chain is 4-hydroxybenzoate octaprenyltransferase from Yersinia pseudotuberculosis serotype O:1b (strain IP 31758).